Consider the following 228-residue polypeptide: UPF0173 metal-dependent hydrolase Lm4b_01588 (228 aa).

This sequence belongs to the UPF0173 family.

In Listeria monocytogenes serotype 4b (strain CLIP80459), this protein is UPF0173 metal-dependent hydrolase Lm4b_01588.